The chain runs to 154 residues: Iron-sulfur cluster assembly 2 homolog, mitochondrial (154 aa).

The N-terminal 8 residues, 1–8 (MAAARGLS), are a transit peptide targeting the mitochondrion. Residues C79, C144, and C146 each coordinate Fe cation.

This sequence belongs to the HesB/IscA family. As to quaternary structure, heterotetramer; forms a dimer of dimers with IBA57. Interacts with [2Fe-2S]-ISCA2 forming the heterodimer [2Fe- 2S]-ISCA2-IBA57 complex; [2Fe-2S] cluster binding is absolutely required to promote the complex formation.

The protein localises to the mitochondrion. Functionally, involved in the maturation of mitochondrial 4Fe-4S proteins functioning late in the iron-sulfur cluster assembly pathway. May be involved in the binding of an intermediate of Fe/S cluster assembly. This is Iron-sulfur cluster assembly 2 homolog, mitochondrial (ISCA2) from Pongo abelii (Sumatran orangutan).